Here is a 481-residue protein sequence, read N- to C-terminus: Argininosuccinate synthase (481 aa).

ATP is bound by residues 17–25 and Ala43; that span reads AFSGGLDTS. Residue Tyr99 participates in L-citrulline binding. ATP-binding residues include Gly129 and Thr131. Residues Thr131, Asn135, and Asp136 each contribute to the L-aspartate site. Residue Asn135 coordinates L-citrulline. Residue Asp136 coordinates ATP. L-citrulline contacts are provided by Arg139 and Ser192. Asp194 contacts ATP. Residues Thr201, Glu203, and Glu280 each contribute to the L-citrulline site.

It belongs to the argininosuccinate synthase family. Type 2 subfamily. As to quaternary structure, homotetramer.

It is found in the cytoplasm. It carries out the reaction L-citrulline + L-aspartate + ATP = 2-(N(omega)-L-arginino)succinate + AMP + diphosphate + H(+). It participates in amino-acid biosynthesis; L-arginine biosynthesis; L-arginine from L-ornithine and carbamoyl phosphate: step 2/3. The protein is Argininosuccinate synthase (argG) of Streptomyces coelicolor (strain ATCC BAA-471 / A3(2) / M145).